The primary structure comprises 366 residues: Proline-rich protein 19 (366 aa).

Disordered stretches follow at residues 1-53, 102-149, 256-286, and 301-338; these read MDPR…RDPC, ESHT…DLPV, TPAH…AAWG, and ATPP…WSPN. Basic residues predominate over residues 18 to 29; the sequence is GRIRRRKTRRER. Polar residues-rich tracts occupy residues 104 to 113 and 256 to 265; these read HTPQLPTKPS and TPAHRGSQVQ. Low complexity predominate over residues 275 to 286; sequence SSASSPSGAAWG. Over residues 302-326 the composition is skewed to pro residues; the sequence is TPPPPPPQPWDVRPPQPLPQPPSPL.

As to quaternary structure, interacts with CNTD1. As to expression, preferentially expressed in gonads.

The protein resides in the nucleus. Its subcellular location is the chromosome. Its function is as follows. Promotes meiotic crossing over formation through its interaction with CNTD1 by participating in the crossover differentiation step of crossover-specific recombination intermediates. The sequence is that of Proline-rich protein 19 from Mus musculus (Mouse).